We begin with the raw amino-acid sequence, 257 residues long: uncharacterized protein (257 aa).

An N-terminal signal peptide occupies residues 1–22 (MIHSKRLRLWLYLVLLAVFIGA). Cys23 carries the N-palmitoyl cysteine lipid modification. Cys23 is lipidated: S-diacylglycerol cysteine.

The protein belongs to the staphylococcal tandem lipoprotein family.

The protein localises to the cell membrane. This is an uncharacterized protein from Staphylococcus aureus (strain NCTC 8325 / PS 47).